The following is a 451-amino-acid chain: uncharacterized protein (451 aa).

A TRAM domain is found at 1 to 59 (MLHKNDIIETEISDISHEGMGIAKVDGFVFFVENALPGEIIKMRVLKLRKRIGYGKVEE). Residues Q283, Y312, E333, and D381 each contribute to the S-adenosyl-L-methionine site. C408 (nucleophile) is an active-site residue.

Belongs to the class I-like SAM-binding methyltransferase superfamily. RNA M5U methyltransferase family.

This is an uncharacterized protein from Streptococcus agalactiae serotype V (strain ATCC BAA-611 / 2603 V/R).